We begin with the raw amino-acid sequence, 116 residues long: Iron-sulfur cluster insertion protein ErpA (116 aa).

Iron-sulfur cluster is bound by residues cysteine 44, cysteine 108, and cysteine 110.

This sequence belongs to the HesB/IscA family. In terms of assembly, homodimer. Requires iron-sulfur cluster as cofactor.

In terms of biological role, required for insertion of 4Fe-4S clusters for at least IspG. The polypeptide is Iron-sulfur cluster insertion protein ErpA (Pseudomonas fluorescens (strain Pf0-1)).